Here is a 146-residue protein sequence, read N- to C-terminus: Probable glycine cleavage system H protein 1, mitochondrial (146 aa).

The N-terminal 30 residues, 1–30 (MLKTLRFGTRAFGQNLNIAKRNFCTRYTND), are a transit peptide targeting the mitochondrion. The 83-residue stretch at 41-123 (NYRLGITDFA…MGDGWIVEYK (83 aa)) folds into the Lipoyl-binding domain. Lysine 82 is modified (N6-lipoyllysine).

The protein belongs to the GcvH family. In terms of assembly, the glycine cleavage system is composed of four proteins: P, T, L and H. The cofactor is (R)-lipoate.

The protein resides in the mitochondrion. Its function is as follows. The glycine cleavage system catalyzes the degradation of glycine. The H protein shuttles the methylamine group of glycine from the P protein to the T protein. This is Probable glycine cleavage system H protein 1, mitochondrial (gcvH1) from Dictyostelium discoideum (Social amoeba).